We begin with the raw amino-acid sequence, 178 residues long: Ribosome maturation factor RimM (178 aa).

The 80-residue stretch at glutamate 99–phenylalanine 178 folds into the PRC barrel domain.

It belongs to the RimM family. Binds ribosomal protein uS19.

It localises to the cytoplasm. Its function is as follows. An accessory protein needed during the final step in the assembly of 30S ribosomal subunit, possibly for assembly of the head region. Essential for efficient processing of 16S rRNA. May be needed both before and after RbfA during the maturation of 16S rRNA. It has affinity for free ribosomal 30S subunits but not for 70S ribosomes. This chain is Ribosome maturation factor RimM, found in Haemophilus influenzae (strain ATCC 51907 / DSM 11121 / KW20 / Rd).